The primary structure comprises 297 residues: Protoheme IX farnesyltransferase 1 (297 aa).

9 helical membrane passes run 23–43 (VVVLMLITSLAGMFLATRAGV), 45–65 (WSVLLFGNLGIGLCAGGAAVV), 93–113 (LPALLFALALALLGMVLLLVF), 117–137 (LTAWLTLASLLGYAVLYTGFL), 145–165 (IVIGGLAGAAPPLLGWVAVSG), 171–191 (PLLLVLIIFAWTPPHFWALAI), 216–236 (LHILLYTLILLAVSLLPYAIH), 241–261 (LYLVCALALGLRFLQWAWVLY), and 277–297 (IGYLFALFIALLLDHYLLLNL).

The protein belongs to the UbiA prenyltransferase family. Protoheme IX farnesyltransferase subfamily.

The protein resides in the cell inner membrane. The enzyme catalyses heme b + (2E,6E)-farnesyl diphosphate + H2O = Fe(II)-heme o + diphosphate. It functions in the pathway porphyrin-containing compound metabolism; heme O biosynthesis; heme O from protoheme: step 1/1. In terms of biological role, converts heme B (protoheme IX) to heme O by substitution of the vinyl group on carbon 2 of heme B porphyrin ring with a hydroxyethyl farnesyl side group. In Pseudomonas putida (strain ATCC 47054 / DSM 6125 / CFBP 8728 / NCIMB 11950 / KT2440), this protein is Protoheme IX farnesyltransferase 1.